The chain runs to 87 residues: uncharacterized protein (87 aa).

The signal sequence occupies residues 1-26 (MMSTQHFILSLTILIIISNLHDEVNA). Disulfide bonds link C61-C75, C68-C79, and C74-C84.

The protein localises to the secreted. This is an uncharacterized protein from Schistosoma japonicum (Blood fluke).